A 447-amino-acid polypeptide reads, in one-letter code: F-box only protein 5 (447 aa).

Residues S94 and S102 each carry the phosphoserine modification. Residues 135–244 (ALETSRLYED…IGRKMGLECV (110 aa)) form an interaction with EVI5 region. Residues 250-296 (LFRRGLRHVLATILAQLSDMDLINVSKVSTTWKKILEDDKGAFQLYS) enclose the F-box domain. Residues 261 to 339 (TILAQLSDMD…KSAAQTSLKK (79 aa)) form a sufficient for interaction with RPS6KA2; Prevents association of CDC20 with RPS6KA2 region. The segment at 261–409 (TILAQLSDMD…GCGFDYCTKC (149 aa)) is requires for efficient binding to CDC20. The interval 305 to 447 (NNNKFSPHAS…KKSKKNLRRL (143 aa)) is inhibits APC ubiquitin ligase activity. A competitively blocks access of APC substrates to the D-box coreceptor formed by FZR1 and ANAPC10 region spans residues 322 to 325 (RTPL). The disordered stretch occupies residues 337–358 (LKKDAQTKLSNQGDQKGSTYSR). Residues 343-357 (TKLSNQGDQKGSTYS) show a composition bias toward polar residues. Residues 374–422 (SLKACIRCNSPAKYDCYLQRATCKREGCGFDYCTKCLCNYHTTKDCSDG) form a ZBR-type zinc finger. Residues C378, C381, C396, C401, C406, C409, H414, and C419 each contribute to the Zn(2+) site. Residues 378–420 (CIRCNSPAKYDCYLQRATCKREGCGFDYCTKCLCNYHTTKDCS) are allows a rapid multiple mono-ubiquitination of the APC substrate, but strongly inhibits the slow ubiquitin chain elongation catalyzed by UBCH10. Residues 437–447 (TKKSKKNLRRL) form a sufficient to suppress UBE2S activity; essential for interaction with UBE2S; competitively inhibits the rapide ubiquitin chain elongation by UBE2D1 which blocks UBE2D1 with APC; indispensable for recruitment and position of FBXO5 to the catalytic site of APC; abrogates the inhibition of ubiquitin chain assembly primarily catalyzed by UBE2S; inhibits the ubiquitination by either UBE2C or UBE2D1 region.

In terms of assembly, part of a SCF (SKP1-cullin-F-box) protein ligase complex. Interacts with BTRC; mediates proteolysis by the SCF ubiquitin ligase complex leading to activation of APC in late mitosis and subsequent mitotic progression. Interacts with FZR1/CDH1 and the N-terminal substrate-binding domain of CDC20; prevents APC activation. Also interacts with EVI5 which blocks its phosphorylation by PLK1 and prevents its subsequent binding to BTRC and degradation. Interacts simultaneously with anaphase promoting complex (APC), through at least ANAPC2, CDC23, CDC27, the APC substrate GMNN and the APC activator FZR1. Interacts with UBE2S; interferes with the activity of UBE2S mainly by disrupting the dynamic electrostatic association between the C-terminal tail of UBE2S and ANAPC2. Interacts with RPS6KA2; cooperates to induce the metaphase arrest of early blastomeres; increases and stabilizes interaction of FBXO5 with CDC20. Phosphorylation by CDK2 and subsequently by PLK1 triggers degradation during early mitosis through ubiquitin-mediated proteolysis by the SCF ubiquitin ligase complex containing the F-box protein BTRC. This degradation is necessary for the activation of APC in late mitosis and subsequent mitotic progression. Phosphorylated by RPS6KA2; increases and stabilizes interaction with CDC20. In terms of processing, ubiquitinated by the SCF(BTRC) complex following phosphorylation by PLK1. Undergoes both 'Lys-11' and 'Lys-48'-linked polyubiquitination by APC-FZR1 complex leading to degradation by proteasome during G1 phase. Degraded through the SCF(BTRC) complex; degradation occurs during oocyte maturation, between germinal vesicle breakdown (GVBD) and meiosis I, and is required for the meiosis I-meiosis II transition.

Its subcellular location is the nucleus. The protein resides in the cytoplasm. The protein localises to the cytoskeleton. It localises to the spindle. Its pathway is protein modification; protein ubiquitination. Functionally, regulator of APC activity during mitotic and meiotic cell cycle. During mitotic cell cycle plays a role as both substrate and inhibitor of APC-FZR1 complex. During G1 phase, plays a role as substrate of APC-FZR1 complex E3 ligase. Then switches as an inhibitor of APC-FZR1 complex during S and G2 leading to cell-cycle commitment. As APC inhibitor, prevents the degradation of APC substrates at multiple levels: by interacting with APC and blocking access of APC substrates to the D-box coreceptor, formed by FZR1 and ANAPC10; by suppressing ubiquitin ligation and chain elongation by APC by preventing the UBE2C and UBE2S activities. Plays a role in genome integrity preservation by coordinating DNA replication with mitosis through APC inhibition in interphase to stabilize CCNA2 and GMNN in order to promote mitosis and prevent rereplication and DNA damage-induced cellular senescence. During oocyte maturation, plays a role in meiosis through inactivation of APC-FZR1 complex. Inhibits APC through RPS6KA2 interaction that increases FBXO5 affiniy for CDC20 leading to the metaphase arrest of the second meiotic division before fertilization. Controls entry into the first meiotic division through inactivation of APC-FZR1 complex. Promotes migration and osteogenic differentiation of mesenchymal stem cells. The chain is F-box only protein 5 from Homo sapiens (Human).